Consider the following 301-residue polypeptide: MNIVFSKEVESALKHKRPVVALESTIITHGMPYPKNVEMALNVENIIRKQGAVPATIAIINGIIHVGLENDEINELAKLKDVIKTSKRDFGYVLANKKNGGTTVSGTVLVAQKVGIPVFATGGIGGVHRGAEITFDISRDLDELSTNNVLVVCAGAKLILDLGLTLEYLETKGVEVLGYNSDKLPAFYSSSSEFNVTYNVHSASEVAAIMKAKWKFTNGGIILANPIPEQYGLEYEYILDNINKAIEQAKVEGISGKKTTPYLLSKVLELTEGKSLEANIQLVYNNAKVAAQVAVEYAKQK.

Catalysis depends on glutamate 23, which acts as the Proton donor. Substrate is bound by residues lysine 84 and valine 104. Aspartate 136 serves as a coordination point for Mn(2+). Residue 138-140 (SRD) coordinates substrate. The active-site Nucleophile is the lysine 157.

Belongs to the pseudouridine-5'-phosphate glycosidase family. Homotrimer. The cofactor is Mn(2+).

It catalyses the reaction D-ribose 5-phosphate + uracil = psi-UMP + H2O. Its function is as follows. Catalyzes the reversible cleavage of pseudouridine 5'-phosphate (PsiMP) to ribose 5-phosphate and uracil. Functions biologically in the cleavage direction, as part of a pseudouridine degradation pathway. The polypeptide is Pseudouridine-5'-phosphate glycosidase (Mycoplasmopsis agalactiae (strain NCTC 10123 / CIP 59.7 / PG2) (Mycoplasma agalactiae)).